Consider the following 256-residue polypeptide: Hydroxyacylglutathione hydrolase (256 aa).

Zn(2+) is bound by residues His55, His57, Asp59, His60, His113, Asp130, and His168.

This sequence belongs to the metallo-beta-lactamase superfamily. Glyoxalase II family. As to quaternary structure, monomer. It depends on Zn(2+) as a cofactor.

It catalyses the reaction an S-(2-hydroxyacyl)glutathione + H2O = a 2-hydroxy carboxylate + glutathione + H(+). Its pathway is secondary metabolite metabolism; methylglyoxal degradation; (R)-lactate from methylglyoxal: step 2/2. Functionally, thiolesterase that catalyzes the hydrolysis of S-D-lactoyl-glutathione to form glutathione and D-lactic acid. The sequence is that of Hydroxyacylglutathione hydrolase from Alkalilimnicola ehrlichii (strain ATCC BAA-1101 / DSM 17681 / MLHE-1).